Here is a 638-residue protein sequence, read N- to C-terminus: 1,4-alpha-glucan branching enzyme GlgB (638 aa).

Asp320 serves as the catalytic Nucleophile. Glu373 acts as the Proton donor in catalysis.

The protein belongs to the glycosyl hydrolase 13 family. GlgB subfamily. Monomer.

The enzyme catalyses Transfers a segment of a (1-&gt;4)-alpha-D-glucan chain to a primary hydroxy group in a similar glucan chain.. It functions in the pathway glycan biosynthesis; glycogen biosynthesis. Catalyzes the formation of the alpha-1,6-glucosidic linkages in glycogen by scission of a 1,4-alpha-linked oligosaccharide from growing alpha-1,4-glucan chains and the subsequent attachment of the oligosaccharide to the alpha-1,6 position. This Oleidesulfovibrio alaskensis (strain ATCC BAA-1058 / DSM 17464 / G20) (Desulfovibrio alaskensis) protein is 1,4-alpha-glucan branching enzyme GlgB.